The sequence spans 167 residues: G/U mismatch-specific DNA glycosylase (167 aa).

Belongs to the uracil-DNA glycosylase (UDG) superfamily. TDG/mug family. As to quaternary structure, binds DNA as a monomer.

Its subcellular location is the cytoplasm. It carries out the reaction Specifically hydrolyzes mismatched double-stranded DNA and polynucleotides, releasing free uracil.. Functionally, excises ethenocytosine and uracil, which can arise by alkylation or deamination of cytosine, respectively, from the corresponding mispairs with guanine in ds-DNA. It is capable of hydrolyzing the carbon-nitrogen bond between the sugar-phosphate backbone of the DNA and the mispaired base. The complementary strand guanine functions in substrate recognition. Required for DNA damage lesion repair in stationary-phase cells. The protein is G/U mismatch-specific DNA glycosylase of Pectobacterium carotovorum subsp. carotovorum (strain PC1).